The following is a 358-amino-acid chain: MTDWADPDALDLSDGETFDSLLDRADTREKGHFFEFFAEGDELAHDPGLRLTHHGSEQWMGQTLNHDPAYWRADTARERDFEERPVHPDYLLACVMGITVEDLSEKGGYFLGRDDVTFHQPVTAGTPLSVTSTVVDTKTSSSRPQYGIVTWETEGRDRETGETLVSYRRTNMIPRREPAATDGGAVGEQDEDGPMLPDTPISPDGEYFEDFQAALERADTENAAVAYRHERGRTMDDQLVAGLPLATLNTARQHHNRDEMADSPSGDIVAYGDVTRSVALAHARSDEATYRERRFADEQFHDFVTLGDTVYGFTRVLDCDPDAGPERAGAVTFEHVAFNQDQTPVYSGRRTALIQRDT.

Residues 44 to 148 (AHDPGLRLTH…TSSSRPQYGI (105 aa)) form the MaoC-like domain.

It belongs to the enoyl-CoA hydratase/isomerase family.

The enzyme catalyses (2R,3S)-beta-methylmalyl-CoA = 2-methylfumaryl-CoA + H2O. Its function is as follows. Involved in the methylaspartate cycle. Catalyzes the reversible hydration of mesaconyl-CoA (2-methylfumaryl-CoA) to yield beta-methylmalyl-CoA ((2R,3S)-beta-methylmalyl-CoA). The protein is Mesaconyl-CoA hydratase of Haloarcula marismortui (strain ATCC 43049 / DSM 3752 / JCM 8966 / VKM B-1809) (Halobacterium marismortui).